Here is a 121-residue protein sequence, read N- to C-terminus: Neuromedin-B (121 aa).

The N-terminal stretch at M1 to A24 is a signal peptide. The residue at position 56 (M56) is a Methionine amide. A propeptide spanning residues S60–K121 is cleaved from the precursor. Positions L61–Q80 are disordered.

Belongs to the bombesin/neuromedin-B/ranatensin family.

It localises to the secreted. Its subcellular location is the cell projection. It is found in the neuron projection. Stimulates smooth muscle contraction. Induces sighing by acting directly on the pre-Botzinger complex, a cluster of several thousand neurons in the ventrolateral medulla responsible for inspiration during respiratory activity. Contributes to the induction of sneezing following exposure to chemical irritants or allergens which causes release of NMB by nasal sensory neurons and activation of NMBR-expressing neurons in the sneeze-evoking region of the brainstem. These in turn activate neurons of the caudal ventral respiratory group, giving rise to the sneezing response. Contributes to induction of acute itch, possibly through activation of the NMBR receptor on dorsal root ganglion neurons. Increases expression of NMBR and steroidogenic mediators STAR, CYP11A1 and HSD3B1 in Leydig cells, induces secretion of testosterone by Leydig cells and also promotes Leydig cell proliferation. Plays a role in the innate immune response to influenza A virus infection by enhancing interferon alpha expression and reducing expression of IL6. Plays a role in CSF1-induced proliferation of osteoclast precursors by contributing to the positive regulation of the expression of the CSF1 receptor CSF1R. In Bos taurus (Bovine), this protein is Neuromedin-B (NMB).